The sequence spans 317 residues: Ferrochelatase (317 aa).

Positions 187 and 268 each coordinate Fe cation.

The protein belongs to the ferrochelatase family.

The protein resides in the cytoplasm. It carries out the reaction heme b + 2 H(+) = protoporphyrin IX + Fe(2+). It participates in porphyrin-containing compound metabolism; protoheme biosynthesis; protoheme from protoporphyrin-IX: step 1/1. Its function is as follows. Catalyzes the ferrous insertion into protoporphyrin IX. In Campylobacter concisus (strain 13826), this protein is Ferrochelatase.